A 220-amino-acid polypeptide reads, in one-letter code: Uracil-DNA glycosylase 2 (220 aa).

Residue Asp-65 is the Proton acceptor of the active site.

This sequence belongs to the uracil-DNA glycosylase (UDG) superfamily. UNG family.

The protein resides in the cytoplasm. It carries out the reaction Hydrolyzes single-stranded DNA or mismatched double-stranded DNA and polynucleotides, releasing free uracil.. Excises uracil residues from the DNA which can arise as a result of misincorporation of dUMP residues by DNA polymerase or due to deamination of cytosine. This chain is Uracil-DNA glycosylase 2, found in Bacteroides fragilis (strain ATCC 25285 / DSM 2151 / CCUG 4856 / JCM 11019 / LMG 10263 / NCTC 9343 / Onslow / VPI 2553 / EN-2).